The chain runs to 346 residues: Putative D-threonate 4-phosphate dehydrogenase (346 aa).

Substrate contacts are provided by histidine 141 and threonine 142. Residues histidine 171, histidine 215, and histidine 270 each contribute to the a divalent metal cation site. Substrate contacts are provided by lysine 278 and arginine 296.

Belongs to the PdxA family. PdxA2 subfamily. As to quaternary structure, homodimer. Requires a divalent metal cation as cofactor.

It carries out the reaction 4-O-phospho-D-threonate + NAD(+) = dihydroxyacetone phosphate + CO2 + NADH. Its function is as follows. Catalyzes the NAD-dependent oxidation and subsequent decarboxylation of D-threonate 4-phosphate to produce dihydroxyacetone phosphate (DHAP). This chain is Putative D-threonate 4-phosphate dehydrogenase, found in Cutibacterium acnes (strain DSM 16379 / KPA171202) (Propionibacterium acnes).